The following is a 67-amino-acid chain: MAVPKRKQSRANTHARRSQWKAEVPTLVKTVENGKVTYSLPHRAKVVEDSAGTALFLEYKGRKVADV.

Residues Met-1–Gln-19 are compositionally biased toward basic residues. Residues Met-1 to Trp-20 form a disordered region.

It belongs to the bacterial ribosomal protein bL32 family.

This chain is Large ribosomal subunit protein bL32, found in Leifsonia xyli subsp. xyli (strain CTCB07).